The chain runs to 666 residues: Endogenous retrovirus group K member 21 Gag polyprotein (666 aa).

Glycine 2 is lipidated: N-myristoyl glycine. Disordered stretches follow at residues 165–189 (GKGPELVGPSESKPRGTSPLPAGQV) and 217–264 (ELQY…GSEL). The segment covering 232–247 (GMPPAPQGRAPYPQPP) has biased composition (pro residues). 2 CCHC-type zinc fingers span residues 544-561 (GKCYNCGQIGHLKKNCPV) and 580-597 (DLCPRCKKGKHWASQCRS). The tract at residues 598-641 (KFDKNGQPLSGNEQRGQPQAPQQTGAFPIQPFVPQGFQGQQPPL) is disordered. The segment covering 604–622 (QPLSGNEQRGQPQAPQQTG) has biased composition (polar residues). Residues 624–640 (FPIQPFVPQGFQGQQPP) show a composition bias toward low complexity.

The protein belongs to the beta type-B retroviral Gag protein family. HERV class-II K(HML-2) gag subfamily. Myristoylation is essential for retroviral assembly. Alteration of the glycine residue leads to a block in the budding of particles and an accumulation of Gag inside the cell. Post-translationally, specific enzymatic cleavages may yield mature proteins.

The protein localises to the cell membrane. In terms of biological role, the products of the Gag polyproteins of infectious retroviruses perform highly complex orchestrated tasks during the assembly, budding, maturation, and infection stages of the viral replication cycle. During viral assembly, the proteins form membrane associations and self-associations that ultimately result in budding of an immature virion from the infected cell. Gag precursors also function during viral assembly to selectively bind and package two plus strands of genomic RNA. Endogenous Gag proteins may have kept, lost or modified their original function during evolution. The chain is Endogenous retrovirus group K member 21 Gag polyprotein (ERVK-21) from Homo sapiens (Human).